Here is a 583-residue protein sequence, read N- to C-terminus: Kelch-like protein 38 (583 aa).

A BTB domain is found at 34 to 101 (TDVILCTEDK…IYTGSITITM (68 aa)). The BACK domain occupies 136-237 (CLSMIRLSEI…HPTYLFQFIA (102 aa)). Kelch repeat units follow at residues 285-332 (TLVV…CIHS), 333-385 (ILYV…SYLH), 386-433 (FIFA…ANDQ), 435-481 (IYVF…VIED), 482-523 (KIYI…VINN), and 525-575 (LYVT…PLIC).

The sequence is that of Kelch-like protein 38 (klhl38) from Danio rerio (Zebrafish).